The sequence spans 138 residues: MRTLWIVAVLLVGVEGNLLQFNKMIKIMTRKNGIPYYSSYGCYCGWGGQGQPLDATDRCCFVHDCCYEKLTDCSPKTDIYSYSWKSGVIICGEGTPCEKQICECDRVAAVCFGANLGTYKKSYMFYPDFLCTEPSEKC.

Residues 1-16 (MRTLWIVAVLLVGVEG) form the signal peptide. 7 cysteine pairs are disulfide-bonded: C42-C131, C44-C60, C59-C111, C65-C138, C66-C104, C73-C97, and C91-C102. 3 residues coordinate Ca(2+): Y43, G45, and G47. The active site involves H63. D64 is a binding site for Ca(2+). D105 is a catalytic residue.

Monomer. Ca(2+) is required as a cofactor. In terms of processing, contains 7 disulfide bonds. As to expression, expressed by the venom gland.

It localises to the secreted. The catalysed reaction is a 1,2-diacyl-sn-glycero-3-phosphocholine + H2O = a 1-acyl-sn-glycero-3-phosphocholine + a fatty acid + H(+). Snake venom phospholipase A2 (PLA2) that shows myotoxic activities. PLA2 catalyzes the calcium-dependent hydrolysis of the 2-acyl groups in 3-sn-phosphoglycerides. The polypeptide is Basic phospholipase A2 Bs-N6 (Bothriechis schlegelii (Eyelash palm pitviper)).